The following is a 165-amino-acid chain: Ribonuclease H2 subunit C (165 aa).

An N-acetylmethionine modification is found at Met1.

The protein belongs to the RNase H2 subunit C family. The RNase H2 complex is a heterotrimer composed of the catalytic subunit RNASEH2A and the non-catalytic subunits RNASEH2B and RNASEH2C.

The protein localises to the nucleus. Functionally, non catalytic subunit of RNase H2, an endonuclease that specifically degrades the RNA of RNA:DNA hybrids. Participates in DNA replication, possibly by mediating the removal of lagging-strand Okazaki fragment RNA primers during DNA replication. Mediates the excision of single ribonucleotides from DNA:RNA duplexes. The protein is Ribonuclease H2 subunit C (RNASEH2C) of Bos taurus (Bovine).